We begin with the raw amino-acid sequence, 1050 residues long: MTSKFDPLKFEEEVLKYWDDNNIYKKLKEINEKNHKKFLFIDGPPYPSSPIPHIGTVWNKTIKDCILRYERLMGYSVKDQPGYDTHGLPIEVETEKRLGIKSKAEIIEKVGVDNFISKCKEFAVNNSKSLTQNFRNLGIFMDWENPYFTFNNDYISNSWAVIKKAYERGLLYKGVHVLHWCSRCETTLADYEVSEYRDLEDPSIYVKFRVKGEPNRYLVIWTTTPWTLPANVFVMINKDFEYADVRVGDEILVIAKDRVKELMKEARIKEYKILRVYKGEELLGLEYEHPLADIVSAQSKINNHHKVLDGGEAVTLQEGTGLVHSAPGHGDVDFEIGKKYDMPVVMLVNDKGEFTQDSGKYAGKYVRSASEEIISDLKQRSALLHASKIVHRYPVCWRCKTPLILRAIEQWFIAVSKLKDHLMGEIDRVRWIPDWGKTRIGNMVKEVRDWVISRQRFWGTPLPIWVCSNCQNIIVVGGVDELSKISINQVPQDLHRPWIDSVVVRCEKCGGEARRISDVADVWFDSGVAFFASLGQDWRKRWSELGPVDLVLEGHDQLRGWFFSLLRTGVILMDKAPYEAVLVHGFMLDEQGREMHKSSGNYVEPSQVVSKYGRDTLRLWLLRNTTWEDAKFSWKSLDMTRRDLNIIWNVYVFANTYMSLDEFKYSKYSYNDIKDYLKLEDIWLLSRYYRMLKEVIEAMKEYKVHELANKVTAFIIDDISRFYLRVTRKRAWNEANDPDKIAMYYVLYHVLKGSLILLSTVIPFTAEKIYLDFVQERLESISMEKIPEIKEEFINSEIEEAFEVAKEIIDAGLNARAKAGIKLRWPLKEVYVFLVSDKDRRSIEKITDVLSSLLNSKSIIIEGIDGYKRFSKIRATPNTGSIGPTFKRLSVKVAEYIQNNSDKVAQDIVSKGYHEFNVDSENLRLDISHVNLVEEVEKGYVSARFSKGVVLLKQEMSKEEEEEGIIRDLIRRIQFMRKQLSLNVNEYILLSIRAPDDKVDLIKKWEQYIKNETRAKELRIGDVSGDLIQDWDVEEETYTIGVSKADVSVS.

The short motif at 45-56 is the 'HIGH' region element; it reads PYPSSPIPHIGT. Residues 594–598 carry the 'KMSKS' region motif; that stretch reads EMHKS. Lys597 lines the ATP pocket.

The protein belongs to the class-I aminoacyl-tRNA synthetase family. IleS type 2 subfamily. Monomer. It depends on Zn(2+) as a cofactor.

The protein localises to the cytoplasm. It catalyses the reaction tRNA(Ile) + L-isoleucine + ATP = L-isoleucyl-tRNA(Ile) + AMP + diphosphate. Its function is as follows. Catalyzes the attachment of isoleucine to tRNA(Ile). As IleRS can inadvertently accommodate and process structurally similar amino acids such as valine, to avoid such errors it has two additional distinct tRNA(Ile)-dependent editing activities. One activity is designated as 'pretransfer' editing and involves the hydrolysis of activated Val-AMP. The other activity is designated 'posttransfer' editing and involves deacylation of mischarged Val-tRNA(Ile). The sequence is that of Isoleucine--tRNA ligase from Sulfolobus acidocaldarius (strain ATCC 33909 / DSM 639 / JCM 8929 / NBRC 15157 / NCIMB 11770).